The following is a 925-amino-acid chain: Nuclear pore complex protein Nup107 (925 aa).

Residue M1 is modified to N-acetylmethionine. S4, S10, S11, and S37 each carry phosphoserine. The disordered stretch occupies residues 20 to 66 (TRTARKQSAQKRVLLQASQDENFGNTTPRNQVIPRTPSSFRQPFTPT). Polar residues-rich tracts occupy residues 35–49 (QASQ…TPRN) and 55–66 (TPSSFRQPFTPT). T46 and T55 each carry phosphothreonine. Phosphoserine occurs at positions 57 and 58. An Asymmetric dimethylarginine; alternate modification is found at R60. R60 is subject to Omega-N-methylarginine; alternate. T64 carries the phosphothreonine modification. R68 bears the Omega-N-methylarginine mark. 2 positions are modified to phosphoserine: S69 and S86.

This sequence belongs to the nucleoporin Nup84/Nup107 family. Part of the nuclear pore complex (NPC). Forms part of the Nup160 subcomplex in the nuclear pore which is composed of NUP160, NUP133, NUP107 and Nup96; this complex plays a role in RNA export and in tethering Nup98 and NUP153 to the nucleus. Does not interact with TPR. Interacts with ZNF106. As to expression, ubiquitously expressed in fetal and adult tissues.

It is found in the nucleus membrane. The protein localises to the nucleus. The protein resides in the nuclear pore complex. It localises to the chromosome. Its subcellular location is the centromere. It is found in the kinetochore. Plays a role in the nuclear pore complex (NPC) assembly and/or maintenance. Required for the assembly of peripheral proteins into the NPC. May anchor NUP62 to the NPC. Involved in nephrogenesis. This chain is Nuclear pore complex protein Nup107 (NUP107), found in Homo sapiens (Human).